The primary structure comprises 145 residues: S-adenosylmethionine synthase 2 (145 aa).

ATP is bound by residues 6–7 (RK), A23, K27, and K31. An L-methionine-binding site is contributed by K31.

It belongs to the AdoMet synthase family. Homotetramer. Requires Mn(2+) as cofactor. The cofactor is Mg(2+). Co(2+) is required as a cofactor. It depends on K(+) as a cofactor. As to expression, mainly in floral buds and roots.

The protein localises to the cytoplasm. It catalyses the reaction L-methionine + ATP + H2O = S-adenosyl-L-methionine + phosphate + diphosphate. Its pathway is amino-acid biosynthesis; S-adenosyl-L-methionine biosynthesis; S-adenosyl-L-methionine from L-methionine: step 1/1. Catalyzes the formation of S-adenosylmethionine from methionine and ATP. The reaction comprises two steps that are both catalyzed by the same enzyme: formation of S-adenosylmethionine (AdoMet) and triphosphate, and subsequent hydrolysis of the triphosphate. The polypeptide is S-adenosylmethionine synthase 2 (SMS-2) (Petroselinum crispum (Parsley)).